The following is a 355-amino-acid chain: Peptide chain release factor 1 (355 aa).

Gln-233 carries the N5-methylglutamine modification.

This sequence belongs to the prokaryotic/mitochondrial release factor family. In terms of processing, methylated by PrmC. Methylation increases the termination efficiency of RF1.

It is found in the cytoplasm. Peptide chain release factor 1 directs the termination of translation in response to the peptide chain termination codons UAG and UAA. The chain is Peptide chain release factor 1 from Dehalococcoides mccartyi (strain ATCC BAA-2100 / JCM 16839 / KCTC 5957 / BAV1).